Here is a 117-residue protein sequence, read N- to C-terminus: Protein SMALL AUXIN UP-REGULATED RNA 54 (117 aa).

Belongs to the ARG7 family. Expressed in trichomes. Hardly observed in leaves.

It is found in the cell membrane. Its function is as follows. Provide a mechanistic link between auxin and plasma membrane H(+)-ATPases (PM H(+)-ATPases, e.g. AHA1 and AHA2), and triggers PM H(+)-ATPases activity by promoting phosphorylation of their C-terminal autoinhibitory domain as a result of PP2C-D subfamily of type 2C phosphatases inhibition, thus leading to the acidification of the apoplast and the facilitation of solutes and water uptake to drive cell expansion. Triggers plant growth probably by promoting cell elongation. Regulates branch angles and bending. In Arabidopsis thaliana (Mouse-ear cress), this protein is Protein SMALL AUXIN UP-REGULATED RNA 54.